A 242-amino-acid polypeptide reads, in one-letter code: Small ribosomal subunit protein uS5 (242 aa).

The span at 1–14 shows a compositional bias: polar residues; it reads MADENSTGPGNQPE. The interval 1–65 is disordered; that stretch reads MADENSTGPG…DRRPRDEDGG (65 aa). The segment covering 41–65 has biased composition (basic and acidic residues); it reads DGGRGGRDGGRGRRDDRRPRDEDGG. Positions 68–131 constitute an S5 DRBM domain; sequence LIEKLVHINR…AAAKKAMIRV (64 aa). Residues 204 to 242 are disordered; the sequence is EQTSPKSVAQRRGKKVSDLIKRGGASDRAAEAEAAAVTE. The segment covering 218-234 has biased composition (basic and acidic residues); it reads KVSDLIKRGGASDRAAE.

This sequence belongs to the universal ribosomal protein uS5 family. Part of the 30S ribosomal subunit. Contacts proteins S4 and S8.

In terms of biological role, with S4 and S12 plays an important role in translational accuracy. Functionally, located at the back of the 30S subunit body where it stabilizes the conformation of the head with respect to the body. The polypeptide is Small ribosomal subunit protein uS5 (Sphingopyxis alaskensis (strain DSM 13593 / LMG 18877 / RB2256) (Sphingomonas alaskensis)).